The following is a 587-amino-acid chain: LAVAEQEASVTSLTSKRYILRFPALETLMLDDNRLSNPSCFASLAGLRRLKKLSLDENRIIRIPYLQQVQLSDESVDWNGGGGSPQKEPQFMLQSKPRMLEDSDEQLDYTVLPMKKDVDRTEVVFSSYPGFSTSETTKICSLPPIFEILPVKSLKARNQTLAPPFPELRYLSLAYNKIAKEDAVLPVALFPSLCEFVFHNNPLVAHTRGVPPLLKSFLQERLGIHLIRRKTVKPKHHVLMSRKESRKVKTEIPKVPKQPLVLHHPQVTTNKSPSKDMLEPEAELAEDLPTTKSTFVESEMPTESLEGLSLSRRTFVPLPPICSDSTVHSEETLSHLSDTAVRLSPEHPSDEDSKSTESIFLTQVSELPSSIIHKDDLELKEKDQKKPPTAPREVKVTRRKLTTASLPSKYHGYEELLTAKPDPAFIEPKGIQKNAQALQHMLKHPLLCHSSKPKLDTLQKPYVPKEKRAQRIPIPPPRKTRTQLLDDIFIRLRDPRNITEAPLGAVLHRRTERRLVNHKQYLEAKRLLKEFQARYRQLVSGSLRTVFGTTPLPPACPALSESQPKFGRFLEFMDEFCQEPTASDSQG.

2 LRR repeats span residues 24 to 45 (ALETLMLDDNRLSNPSCFASLA) and 49 to 70 (RLKKLSLDENRIIRIPYLQQVQ). 2 disordered regions span residues 337-357 (SDTAVRLSPEHPSDEDSKSTE) and 373-396 (HKDDLELKEKDQKKPPTAPREVKV). Basic and acidic residues predominate over residues 344–355 (SPEHPSDEDSKS). The stretch at 518–540 (HKQYLEAKRLLKEFQARYRQLVS) forms a coiled coil.

In terms of tissue distribution, expressed predominantly in testis.

It is found in the cytoplasm. The protein resides in the nucleus. May be involved in the response of cells to X-ray radiation. This is X-ray radiation resistance-associated protein 1 from Macaca fascicularis (Crab-eating macaque).